A 67-amino-acid polypeptide reads, in one-letter code: Large ribosomal subunit protein bL35 (67 aa).

It belongs to the bacterial ribosomal protein bL35 family.

The sequence is that of Large ribosomal subunit protein bL35 from Paramagnetospirillum magneticum (strain ATCC 700264 / AMB-1) (Magnetospirillum magneticum).